Reading from the N-terminus, the 899-residue chain is Probable dipeptidyl-aminopeptidase B (899 aa).

The disordered stretch occupies residues 1 to 69 (MKLDRMRVGS…NHNGRTQGNY (69 aa)). Residues 1–99 (MKLDRMRVGS…NGKSSQRRTL (99 aa)) are Cytoplasmic-facing. The segment covering 32 to 43 (DSSSTASISLTL) has biased composition (low complexity). Residues 100-120 (IVFWLLVALCVGGWAVAFLFF) traverse the membrane as a helical; Signal-anchor for type II membrane protein segment. The Vacuolar portion of the chain corresponds to 121–899 (VTSPGNKTST…KYFNLSFLGH (779 aa)). Over residues 128-139 (TSTSPHSGSNSP) the composition is skewed to polar residues. The tract at residues 128–149 (TSTSPHSGSNSPEGDVTKPGIP) is disordered. N-linked (GlcNAc...) asparagine glycans are attached at residues N212, N308, and N360. S765 (charge relay system) is an active-site residue. N819, N824, and N827 each carry an N-linked (GlcNAc...) asparagine glycan. Active-site charge relay system residues include D842 and H875. N-linked (GlcNAc...) asparagine glycosylation is present at N893.

This sequence belongs to the peptidase S9B family.

Its subcellular location is the vacuole membrane. It carries out the reaction Release of an N-terminal dipeptide, Xaa-Yaa-|-Zaa-, from a polypeptide, preferentially when Yaa is Pro, provided Zaa is neither Pro nor hydroxyproline.. In terms of biological role, type IV dipeptidyl-peptidase which removes N-terminal dipeptides sequentially from polypeptides having unsubstituted N-termini provided that the penultimate residue is proline. This chain is Probable dipeptidyl-aminopeptidase B (DAPB), found in Trichophyton verrucosum (strain HKI 0517).